We begin with the raw amino-acid sequence, 185 residues long: MSKEVLSKSKEKMEKAEQALTRQLGTIRAGRANASLLDRLSVDYYGAATPVNQMASISVPEARMLLITPYDKTILGEIEKAILKSDLGLTPNNDGSVLRLSIPQLTEERRKELVKEVKKEAEEAKVAVRNIRREANEELKKLEKNGDITEDDLRSYGEDVQKLTDESIKNIDSITKDKEAEILEV.

The protein belongs to the RRF family.

It is found in the cytoplasm. Responsible for the release of ribosomes from messenger RNA at the termination of protein biosynthesis. May increase the efficiency of translation by recycling ribosomes from one round of translation to another. The polypeptide is Ribosome-recycling factor (Listeria monocytogenes serovar 1/2a (strain ATCC BAA-679 / EGD-e)).